The primary structure comprises 512 residues: Protein disulfide-isomerase (512 aa).

Positions 1 to 24 are cleaved as a signal peptide; the sequence is MAKNVAIFGLLFSLLLLVPSQIFA. One can recognise a Thioredoxin 1 domain in the interval 25–144; it reads EESSTDAKEF…IVEYLKKQSG (120 aa). Active-site nucleophile residues include Cys62 and Cys65. The cysteines at positions 62 and 65 are disulfide-linked. Residue Asn278 is glycosylated (N-linked (GlcNAc...) asparagine). The region spanning 357 to 485 is the Thioredoxin 2 domain; that stretch reads YKDGKVEPFV…IIEFIEKNKD (129 aa). Residues Cys407 and Cys410 each act as nucleophile in the active site. Cysteines 407 and 410 form a disulfide. A compositionally biased stretch (basic and acidic residues) spans 487 to 496; the sequence is TGAAHQEVEQ. The tract at residues 487–512 is disordered; the sequence is TGAAHQEVEQPKAAAQPEAEQPKDEL. A Prevents secretion from ER motif is present at residues 509–512; the sequence is KDEL.

The protein belongs to the protein disulfide isomerase family.

The protein localises to the endoplasmic reticulum lumen. It carries out the reaction Catalyzes the rearrangement of -S-S- bonds in proteins.. In terms of biological role, participates in the folding of proteins containing disulfide bonds, may be involved in glycosylation, prolyl hydroxylation and triglyceride transfer. This chain is Protein disulfide-isomerase (PDI), found in Medicago sativa (Alfalfa).